The following is a 20-amino-acid chain: Protein PR-L5 (20 aa).

It belongs to the BetVI family.

This is Protein PR-L5 from Lupinus luteus (European yellow lupine).